The chain runs to 702 residues: MPRQIELDKVRNIGIIAHIDAGKTTTTERILFYTGRTYKIGEVHEGTATMDWMPQEQERGITITAAATTAPWRLNGVEYRINIIDTPGHVDFTVEVERSLRVLDGGIVVFDGVAGVEPQSETVWRQADKYNVPRICFVNKMDRVGASFERCVQMIKDRLGAKPAVVQLPIGVEDTFRGTIDLFTMKATIYYDDLGKDIREEEIPAELRPAAEKARNELIEMIAETDDELTLLYLEGQELTVEELKRGLRKATIERKLVPVLCGAALRNKGVQKLLDAVVEYLPSPLDRPAITGTLPGQVMGDEGVEVITRRVSDDEPFTALVFKIVADPYVGKLAYFRVYAGKITKGSYVLNSTRGQRERLGRLLRMHANHREDIDEVYAGEIAAMVGPKNSYTGDTICDPDHPIVLESIRFPEPVIEMAIEPKTKADQDKMSIALSRLAEEDPTFRVYTDQETGQTIIKGMGELHLEVIVDRMRREYKVEANQGKPQVSYRETITVPVDQESRFVRQTGGKGQYGHVKIKFEPLPPGKGFEFVNAIVGGVIPKEYIPAVEQGLREAMQTGVIAGYPVVDLKATLYDGSYHEVDSSEMAFKIAASMCLKEAVRRGKPQLLEPIMKVETVTPEEFLGTVIGDFNSRRGRIEGIEARGNAQVVRAFVPLANMFGYMTDLRSATQGRATASMEFDHYEPLPEALAKEIIEKRSAN.

A tr-type G domain is found at 8-286 (DKVRNIGIIA…AVVEYLPSPL (279 aa)). Residues 17–24 (AHIDAGKT), 85–89 (DTPGH), and 139–142 (NKMD) contribute to the GTP site.

The protein belongs to the TRAFAC class translation factor GTPase superfamily. Classic translation factor GTPase family. EF-G/EF-2 subfamily.

The protein localises to the cytoplasm. In terms of biological role, catalyzes the GTP-dependent ribosomal translocation step during translation elongation. During this step, the ribosome changes from the pre-translocational (PRE) to the post-translocational (POST) state as the newly formed A-site-bound peptidyl-tRNA and P-site-bound deacylated tRNA move to the P and E sites, respectively. Catalyzes the coordinated movement of the two tRNA molecules, the mRNA and conformational changes in the ribosome. In Chloroflexus aggregans (strain MD-66 / DSM 9485), this protein is Elongation factor G.